A 217-amino-acid chain; its full sequence is Killer cell lectin-like receptor subfamily B member 1F (217 aa).

Residues 1–45 (MDTSKVHGNVKPFRCPGYKQASSPSFSPDACRCPHWHHLALKSGC) are Cytoplasmic-facing. An LCK-binding motif motif is present at residues 31-34 (CRCP). The helical; Signal-anchor for type II membrane protein transmembrane segment at 46 to 66 (AGLILLLLSLIGLSVLVRFLV) threads the bilayer. Residues 67–217 (QKPPIEKCSV…WICQKTLIHV (151 aa)) lie on the Extracellular side of the membrane. Asn81 carries an N-linked (GlcNAc...) asparagine glycan. The C-type lectin domain maps to 101–211 (HWNKCLFVSQ…CSSDNHWICQ (111 aa)). Disulfide bonds link Cys122/Cys210 and Cys189/Cys202.

Highly expressed in dendritic cells. Detectable in natural killer cells.

Its subcellular location is the membrane. Functionally, binds CLEC2I/Clr-g leading to activation of natural killer cells or costimulation of IL-2 production and proliferation of T-cells in response to antigen stimulation. May contribute to the formation of the immunological synapse between T-cells and antigen-presenting dendritic cells. In Mus musculus (Mouse), this protein is Killer cell lectin-like receptor subfamily B member 1F (Klrb1f).